A 376-amino-acid chain; its full sequence is Actin-related protein T1 (376 aa).

This sequence belongs to the actin family.

Its subcellular location is the cytoplasm. The protein localises to the cytoskeleton. It localises to the nucleus. The protein resides in the cytoplasmic vesicle. It is found in the secretory vesicle. Its subcellular location is the acrosome. Its function is as follows. Negatively regulates the Hedgehog (SHH) signaling. Binds to the promoter of the SHH signaling mediator, GLI1, and inhibits its expression. The protein is Actin-related protein T1 (Actrt1) of Rattus norvegicus (Rat).